Here is a 303-residue protein sequence, read N- to C-terminus: NAD kinase (303 aa).

The Proton acceptor role is filled by D85. NAD(+)-binding positions include 85 to 86 (DG), R90, 159 to 160 (ND), K187, D189, A224, and Q259.

This sequence belongs to the NAD kinase family. A divalent metal cation is required as a cofactor.

The protein localises to the cytoplasm. It catalyses the reaction NAD(+) + ATP = ADP + NADP(+) + H(+). Its function is as follows. Involved in the regulation of the intracellular balance of NAD and NADP, and is a key enzyme in the biosynthesis of NADP. Catalyzes specifically the phosphorylation on 2'-hydroxyl of the adenosine moiety of NAD to yield NADP. The sequence is that of NAD kinase from Bdellovibrio bacteriovorus (strain ATCC 15356 / DSM 50701 / NCIMB 9529 / HD100).